Consider the following 147-residue polypeptide: Large ribosomal subunit protein uL16c (147 aa).

Residues 1-17 (MLSPKRTRFRKQHRGRM) are compositionally biased toward basic residues. Positions 1-20 (MLSPKRTRFRKQHRGRMKGI) are disordered.

This sequence belongs to the universal ribosomal protein uL16 family. In terms of assembly, part of the 50S ribosomal subunit.

It is found in the plastid. The protein resides in the chloroplast. The polypeptide is Large ribosomal subunit protein uL16c (Ipomoea purpurea (Common morning glory)).